Consider the following 466-residue polypeptide: Adenosylhomocysteinase (466 aa).

3 residues coordinate substrate: threonine 57, aspartate 132, and glutamate 192. NAD(+) is bound at residue threonine 193–threonine 195. Positions 222 and 226 each coordinate substrate. NAD(+) is bound by residues asparagine 227, glycine 256 to glycine 261, glutamate 279, asparagine 314, isoleucine 335 to histidine 337, and asparagine 380.

This sequence belongs to the adenosylhomocysteinase family. It depends on NAD(+) as a cofactor.

It localises to the cytoplasm. It carries out the reaction S-adenosyl-L-homocysteine + H2O = L-homocysteine + adenosine. It functions in the pathway amino-acid biosynthesis; L-homocysteine biosynthesis; L-homocysteine from S-adenosyl-L-homocysteine: step 1/1. Functionally, may play a key role in the regulation of the intracellular concentration of adenosylhomocysteine. This is Adenosylhomocysteinase from Brucella abortus (strain S19).